Here is a 267-residue protein sequence, read N- to C-terminus: tRNA pseudouridine synthase A (267 aa).

Asp54 functions as the Nucleophile in the catalytic mechanism. Tyr112 provides a ligand contact to substrate.

It belongs to the tRNA pseudouridine synthase TruA family. As to quaternary structure, homodimer.

The enzyme catalyses uridine(38/39/40) in tRNA = pseudouridine(38/39/40) in tRNA. Its function is as follows. Formation of pseudouridine at positions 38, 39 and 40 in the anticodon stem and loop of transfer RNAs. In Bordetella avium (strain 197N), this protein is tRNA pseudouridine synthase A.